Here is a 138-residue protein sequence, read N- to C-terminus: Nucleoside diphosphate kinase (138 aa).

Lys-11, Phe-59, Arg-87, Thr-93, Arg-104, and Asn-114 together coordinate ATP. The active-site Pros-phosphohistidine intermediate is the His-117.

Belongs to the NDK family. It depends on Mg(2+) as a cofactor.

The protein localises to the cytoplasm. The catalysed reaction is a 2'-deoxyribonucleoside 5'-diphosphate + ATP = a 2'-deoxyribonucleoside 5'-triphosphate + ADP. The enzyme catalyses a ribonucleoside 5'-diphosphate + ATP = a ribonucleoside 5'-triphosphate + ADP. Major role in the synthesis of nucleoside triphosphates other than ATP. The ATP gamma phosphate is transferred to the NDP beta phosphate via a ping-pong mechanism, using a phosphorylated active-site intermediate. This chain is Nucleoside diphosphate kinase, found in Saccharolobus islandicus (strain Y.N.15.51 / Yellowstone #2) (Sulfolobus islandicus).